The chain runs to 300 residues: Matrix protein (300 aa).

The segment at 1–36 (MHMFPLGVVEDSDPPGPPIGRASGSPPPGAGRSTAK) is disordered.

In terms of assembly, homodimer. Dimerization is critical for virion formation. Interacts with host ANP32B.

Its subcellular location is the virion. The protein resides in the host cell membrane. In terms of biological role, the M protein has a crucial role in virus assembly and interacts with the RNP complex as well as with the viral membrane. Associates with phosphatidylserine (PS) and phosphatidylinositol 4,5-bisphosphate (PIP2) at the plasma membrane. Interaction with PIP2 triggers matrix protein lattice polymerization. Matrix proteins induce host membrane deformation and curvature necessary for virion assembly/budding. This is Matrix protein (M) from Measles virus (strain Yamagata-1) (MeV).